The sequence spans 392 residues: Formate-dependent phosphoribosylglycinamide formyltransferase (392 aa).

N(1)-(5-phospho-beta-D-ribosyl)glycinamide-binding positions include 22-23 (EL) and E82. Residues R114, K155, 160-165 (SSGKGQ), 195-198 (EGVV), and E203 each bind ATP. The ATP-grasp domain occupies 119–308 (RLAAEELGLP…EFALHVRAFL (190 aa)). Positions 267 and 279 each coordinate Mg(2+). N(1)-(5-phospho-beta-D-ribosyl)glycinamide contacts are provided by residues D286, K355, and 362–363 (RR).

It belongs to the PurK/PurT family. In terms of assembly, homodimer.

It carries out the reaction N(1)-(5-phospho-beta-D-ribosyl)glycinamide + formate + ATP = N(2)-formyl-N(1)-(5-phospho-beta-D-ribosyl)glycinamide + ADP + phosphate + H(+). It participates in purine metabolism; IMP biosynthesis via de novo pathway; N(2)-formyl-N(1)-(5-phospho-D-ribosyl)glycinamide from N(1)-(5-phospho-D-ribosyl)glycinamide (formate route): step 1/1. Involved in the de novo purine biosynthesis. Catalyzes the transfer of formate to 5-phospho-ribosyl-glycinamide (GAR), producing 5-phospho-ribosyl-N-formylglycinamide (FGAR). Formate is provided by PurU via hydrolysis of 10-formyl-tetrahydrofolate. This chain is Formate-dependent phosphoribosylglycinamide formyltransferase, found in Salmonella typhimurium (strain LT2 / SGSC1412 / ATCC 700720).